A 140-amino-acid chain; its full sequence is ATP synthase epsilon chain (140 aa).

This sequence belongs to the ATPase epsilon chain family. F-type ATPases have 2 components, CF(1) - the catalytic core - and CF(0) - the membrane proton channel. CF(1) has five subunits: alpha(3), beta(3), gamma(1), delta(1), epsilon(1). CF(0) has three main subunits: a, b and c.

Its subcellular location is the cell inner membrane. In terms of biological role, produces ATP from ADP in the presence of a proton gradient across the membrane. The sequence is that of ATP synthase epsilon chain from Alkalilimnicola ehrlichii (strain ATCC BAA-1101 / DSM 17681 / MLHE-1).